We begin with the raw amino-acid sequence, 425 residues long: UPF0597 protein Swoo_4889 (425 aa).

It belongs to the UPF0597 family.

This Shewanella woodyi (strain ATCC 51908 / MS32) protein is UPF0597 protein Swoo_4889.